A 396-amino-acid chain; its full sequence is NDP-glycosyltransferase YjiC (396 aa).

UDP contacts are provided by residues Asn-18, Thr-234, Val-283, His-298, and 302–306; that span reads NSTME.

The protein belongs to the UDP-glycosyltransferase family.

The enzyme catalyses an NDP-glycose + an acceptor = a glycosylated acceptor + NDP.. Glycosyltransferase that can glycosylate a wide range of substrates, including various flavonoids (flavones, flavonols, flavanones, flavanols, chalcones), isoflavonoids and stilbenes, to produce multiple glycosylated products. It can accept diverse nucleotide diphosphate-D/L-sugars as donors, including ADP-, GDP-, CDP-, TDP- or UDP-alpha-D-glucose, and catalyzes O-, N-, or S-glycosylation. In vitro, catalyzes the glycosylation of, among others, apigenin, 3-hydroxyflavone, phloretin or resveratrol, resulting in multiple glucosylated products, along with mono-, di-, tri- and tetraglucosides. Can also catalyze the glycosylation of the macrolide epothilone A with diverse NDP-D/L-sugars, forming different epothilone A glycoside derivatives. The sequence is that of NDP-glycosyltransferase YjiC from Bacillus licheniformis (strain ATCC 14580 / DSM 13 / JCM 2505 / CCUG 7422 / NBRC 12200 / NCIMB 9375 / NCTC 10341 / NRRL NRS-1264 / Gibson 46).